Consider the following 640-residue polypeptide: RAP domain-containing protein, chloroplastic (640 aa).

The transit peptide at M1 to A32 directs the protein to the chloroplast. Positions S111–D158 are disordered. Over residues P119 to K136 the composition is skewed to basic residues. Basic and acidic residues predominate over residues K137–D146. Residues T147 to D158 show a composition bias toward acidic residues. The RAP domain maps to L575 to R633.

In terms of tissue distribution, expressed in roots, leaf sheaths, veins of leaf blade, mature leaves, endodermis of culm, panicles and anthers.

The protein resides in the plastid. Its subcellular location is the chloroplast. Its function is as follows. Probable RNA-binding protein that plays an essential role in chloroplast development. Regulates the ribosomal proteins homeostasis and ribosomal RNA development in chloroplasts. Involved the regulation of 16S rRNA and required for the expression of chloroplast-associated photosynthetic genes. The chain is RAP domain-containing protein, chloroplastic from Oryza sativa subsp. japonica (Rice).